We begin with the raw amino-acid sequence, 227 residues long: UPF0758 protein Dred_2549 (227 aa).

The 123-residue stretch at 105 to 227 folds into the MPN domain; that stretch reads IIRCPEDVCG…FTSLKSKGLI (123 aa). Zn(2+) is bound by residues histidine 176, histidine 178, and aspartate 189. Positions 176–189 match the JAMM motif motif; it reads HNHPSGDPTPSRED.

Belongs to the UPF0758 family.

This chain is UPF0758 protein Dred_2549, found in Desulforamulus reducens (strain ATCC BAA-1160 / DSM 100696 / MI-1) (Desulfotomaculum reducens).